An 871-amino-acid chain; its full sequence is Protein pob1 (871 aa).

The SH3 domain occupies 2-65 (ASQRFVIALH…PASHVELISD (64 aa)). Residues 42 to 168 (WWEGEDEQGN…PSSDLSNFNT (127 aa)) are disordered. Basic and acidic residues predominate over residues 62-80 (LISDERSDSSDSRRGKEDF). Composition is skewed to low complexity over residues 88–100 (TRSSLSSSRSTSS) and 109–124 (LYSNNSLSSSHSSILN). Positions 131–168 (SKPSVPSNFNSMFPSSKQEGPSPLLDNQPSSDLSNFNT) are enriched in polar residues. Phosphoserine occurs at positions 224 and 225. Position 229 is a phosphotyrosine (tyrosine 229). Serine 241 is subject to Phosphoserine. One can recognise an SAM domain in the interval 250–313 (WSTEEVVEWL…LRKIQQLKDS (64 aa)). Positions 329-343 (ISVSQSSDSSSSIPK) are enriched in low complexity. Disordered regions lie at residues 329 to 371 (ISVS…NRPT) and 384 to 670 (PDLD…KSKR). Polar residues-rich tracts occupy residues 384–395 (PDLDSSPSTDWN) and 404–451 (TPSS…NSGL). Residues serine 433, serine 439, and serine 440 each carry the phosphoserine modification. Threonine 442 is modified (phosphothreonine). Serine 444 is modified (phosphoserine). Residues 456 to 467 (TEPISSPSTSSI) show a composition bias toward low complexity. Over residues 492 to 511 (QPSSNVPTKFTGGASESSSV) the composition is skewed to polar residues. Serine 549 bears the Phosphoserine mark. A compositionally biased stretch (low complexity) spans 549 to 560 (SPSSISSRLPSS). 2 stretches are compositionally biased toward polar residues: residues 561-574 (NLEQGSSSSVTKSP) and 583-606 (KASSPVTSKGVSINEKSAVNNYAT). One can recognise a PH domain in the interval 698–808 (TADCHGWMRK…WSSAFLKATV (111 aa)).

It localises to the cytoplasm. Its subcellular location is the membrane. Functionally, has a role in cell elongation and separation. This Schizosaccharomyces pombe (strain 972 / ATCC 24843) (Fission yeast) protein is Protein pob1 (pob1).